Reading from the N-terminus, the 467-residue chain is Involucrin (467 aa).

The disordered stretch occupies residues 48–467 (EIQEKGFPKH…ELENRTQQEK (420 aa)). Positions 49–75 (IQEKGFPKHEEKRPNPVKDLPDQKCEH) are enriched in basic and acidic residues. Composition is skewed to low complexity over residues 76 to 95 (QQQPGPQKQQLQVKKSQQEL) and 105 to 177 (QQLP…VPQE). Composition is skewed to basic and acidic residues over residues 178–192 (LHLRQHQEKLQDPEL) and 220–231 (RHQEPQEQELHL). Over residues 278 to 290 (QQQQESPEPELQL) the composition is skewed to low complexity. 5 stretches are compositionally biased toward basic and acidic residues: residues 295–318 (QSHEPDMAGDQKEKQKLHKPELYL), 348–373 (LEEKQHQKPPEPELHLGKQQESHEPD), 380–391 (EKQKLGEPELHL), 415–437 (KQEKASREQQLDYSHLEQEKELS), and 450–467 (KQLERKKHELENRTQQEK).

The protein belongs to the involucrin family. In terms of assembly, directly or indirectly cross-linked to cornifelin (CNFN). Substrate of transglutaminase. Specific glutamines or lysines are cross-linked to keratins, desmoplakin and to inter involucrin molecules. As to expression, keratinocytes of epidermis and other stratified squamous epithelia.

The protein localises to the cytoplasm. Part of the insoluble cornified cell envelope (CE) of stratified squamous epithelia. In Mus musculus (Mouse), this protein is Involucrin (Ivl).